A 394-amino-acid chain; its full sequence is Elongation factor Tu (394 aa).

Residues 10–205 (KPHMNVGTIG…TMDNYFDLPE (196 aa)) form the tr-type G domain. Residues 19–26 (GHVDHGKT) are G1. Position 19–26 (19–26 (GHVDHGKT)) interacts with GTP. Thr26 lines the Mg(2+) pocket. The tract at residues 61–65 (GITIN) is G2. The segment at 82 to 85 (DCPG) is G3. Residues 82 to 86 (DCPGH) and 137 to 140 (NKLD) contribute to the GTP site. The segment at 137-140 (NKLD) is G4. The G5 stretch occupies residues 173–175 (SAF).

The protein belongs to the TRAFAC class translation factor GTPase superfamily. Classic translation factor GTPase family. EF-Tu/EF-1A subfamily. In terms of assembly, monomer.

Its subcellular location is the cytoplasm. The catalysed reaction is GTP + H2O = GDP + phosphate + H(+). Its function is as follows. GTP hydrolase that promotes the GTP-dependent binding of aminoacyl-tRNA to the A-site of ribosomes during protein biosynthesis. The sequence is that of Elongation factor Tu from Borrelia duttonii (strain Ly).